Reading from the N-terminus, the 696-residue chain is DNA ligase (696 aa).

NAD(+) is bound by residues 36 to 40, 85 to 86, and Glu-123; these read DAEYD and SL. Catalysis depends on Lys-125, which acts as the N6-AMP-lysine intermediate. Positions 146, 181, 319, and 343 each coordinate NAD(+). 4 residues coordinate Zn(2+): Cys-437, Cys-440, Cys-455, and Cys-461. The BRCT domain maps to 618–696; that stretch reads PEGTSLAGKT…EDGLKALLGL (79 aa).

This sequence belongs to the NAD-dependent DNA ligase family. LigA subfamily. The cofactor is Mg(2+). It depends on Mn(2+) as a cofactor.

The enzyme catalyses NAD(+) + (deoxyribonucleotide)n-3'-hydroxyl + 5'-phospho-(deoxyribonucleotide)m = (deoxyribonucleotide)n+m + AMP + beta-nicotinamide D-nucleotide.. DNA ligase that catalyzes the formation of phosphodiester linkages between 5'-phosphoryl and 3'-hydroxyl groups in double-stranded DNA using NAD as a coenzyme and as the energy source for the reaction. It is essential for DNA replication and repair of damaged DNA. In Bordetella pertussis (strain Tohama I / ATCC BAA-589 / NCTC 13251), this protein is DNA ligase.